The primary structure comprises 220 residues: Metalloproteinase inhibitor 2 (220 aa).

An N-terminal signal peptide occupies residues 1-26 (MGATARSLRLALGLLLLGTLPRGADA). Cys27 contributes to the Zn(2+) binding site. Involved in metalloproteinase-binding stretches follow at residues 27-30 (CSCS) and 95-96 (SA). Cystine bridges form between Cys27/Cys98, Cys29/Cys127, Cys39/Cys152, Cys154/Cys201, Cys159/Cys164, and Cys172/Cys193. The NTR domain maps to 27 to 152 (CSCSPVHPQQ…SLNHRYQMGC (126 aa)).

This sequence belongs to the protease inhibitor I35 (TIMP) family. As to quaternary structure, interacts (via the C-terminal) with MMP2 (via the C-terminal PEX domain); the interaction inhibits the MMP2 activity. The activity of TIMP2 is dependent on the presence of disulfide bonds. As to expression, predominantly expressed in the lung in alveolar macrophages and epithelial cells. Also found in brain, kidney, intestine, spleen and heart.

It localises to the secreted. Its function is as follows. Complexes with metalloproteinases (such as collagenases) and irreversibly inactivates them by binding to their catalytic zinc cofactor. This Cavia porcellus (Guinea pig) protein is Metalloproteinase inhibitor 2 (TIMP2).